The chain runs to 509 residues: Transmembrane protein 102 (509 aa).

Topologically, residues Met1–Arg312 are extracellular. The disordered stretch occupies residues Pro167–Thr236. A compositionally biased stretch (basic and acidic residues) spans Asp174–Pro204. Positions Ser207–Asp224 are enriched in low complexity. The helical transmembrane segment at His313–Pro329 threads the bilayer. At Asp330 to His509 the chain is on the cytoplasmic side.

As to quaternary structure, interacts with CSF2RB; this interaction occurs preferentially in the absence of CSF2.

The protein resides in the cell membrane. In terms of biological role, selectively involved in CSF2 deprivation-induced apoptosis via a mitochondria-dependent pathway. In Mus musculus (Mouse), this protein is Transmembrane protein 102 (Tmem102).